Reading from the N-terminus, the 601-residue chain is Putative ankyrin repeat protein R841 (601 aa).

12 ANK repeats span residues 17–50, 54–86, 91–123, 165–197, 201–234, 238–269, 274–310, 314–349, 361–390, 397–427, 432–463, and 467–500; these read NNIT…DVNA, HGKS…DVNH, QRSV…NINY, RENI…NIDH, YGQT…NINS, KGWS…EINS, NETM…SIDN, KGYT…NINS, VCCD…DVNS, TILM…NPNI, YHKF…DPNI, and IGNN…SYNC.

This is Putative ankyrin repeat protein R841 from Acanthamoeba polyphaga mimivirus (APMV).